The primary structure comprises 289 residues: uncharacterized protein (289 aa).

This is an uncharacterized protein from Escherichia coli (strain K12).